Reading from the N-terminus, the 202-residue chain is V-type proton ATPase subunit E (202 aa).

This sequence belongs to the V-ATPase E subunit family.

Functionally, produces ATP from ADP in the presence of a proton gradient across the membrane. This chain is V-type proton ATPase subunit E, found in Halothermothrix orenii (strain H 168 / OCM 544 / DSM 9562).